The chain runs to 555 residues: Formate--tetrahydrofolate ligase (555 aa).

Residue 65–72 (TPAGEGKT) participates in ATP binding.

It belongs to the formate--tetrahydrofolate ligase family.

It catalyses the reaction (6S)-5,6,7,8-tetrahydrofolate + formate + ATP = (6R)-10-formyltetrahydrofolate + ADP + phosphate. The protein operates within one-carbon metabolism; tetrahydrofolate interconversion. In Syntrophomonas wolfei subsp. wolfei (strain DSM 2245B / Goettingen), this protein is Formate--tetrahydrofolate ligase.